A 570-amino-acid chain; its full sequence is MSFEISRKQYTDLYGPTVGDSVRLADTELFLCVEKDYAAIGEEVAFGGGKVIRDGMGQNGTLVRDVDIPDTVITNVIVLDYTGVYKADVALRDGKIFRIGKAGNPNVMENVDIVIGVATDIIAGEGKILTAGGIDTHVHFLGTDQVNTALASGITTMIGGGTGPSQASMATTVTPGQWNTYNMLSAFEGMPMNFGILGKGHGSSKSPLAEQVRAGAIGLKIHEDWGATPSSINTALEVADDMDIQVALHSDTLNEAGFVEDTIEAIAGRVIHTFHTEGAGGGHAPDLIRVAALPNVLPASTNPTLPYTRNTVEEHLDMVMVAHHLNPDIPEDVAFADSRIRAETIAAEDVLHDMGIFSITSSDSQAMGRVGETITRTWQVADHMKRTRGSLTGDAPYNDNNRLRRFIAKYTINPAIAHGVDYVVGSVEEGKFADLVLWDPKFFGVKPDLVIKGGLMVNSLMGDSNGSIPTPQPRTLRNTWGAFGQAVSRSSITFLSQDAIDANVPDLLNLRKQIRGVRGVRNLTKRDMKLNAEMPDIRVDPETYQVFVNGELITSKPAETVPMARRYFLF.

The 439-residue stretch at 132–570 folds into the Urease domain; sequence GGIDTHVHFL…VPMARRYFLF (439 aa). The Ni(2+) site is built by H137, H139, and K220. At K220 the chain carries N6-carboxylysine. Residue H222 participates in substrate binding. Ni(2+) contacts are provided by H249 and H275. Residue H323 is the Proton donor of the active site. Residue D363 participates in Ni(2+) binding.

Belongs to the metallo-dependent hydrolases superfamily. Urease alpha subunit family. As to quaternary structure, heterotrimer of UreA (gamma), UreB (beta) and UreC (alpha) subunits. Three heterotrimers associate to form the active enzyme. Requires Ni cation as cofactor. In terms of processing, carboxylation allows a single lysine to coordinate two nickel ions.

It localises to the cytoplasm. It carries out the reaction urea + 2 H2O + H(+) = hydrogencarbonate + 2 NH4(+). It functions in the pathway nitrogen metabolism; urea degradation; CO(2) and NH(3) from urea (urease route): step 1/1. This Corynebacterium glutamicum (strain ATCC 13032 / DSM 20300 / JCM 1318 / BCRC 11384 / CCUG 27702 / LMG 3730 / NBRC 12168 / NCIMB 10025 / NRRL B-2784 / 534) protein is Urease subunit alpha.